Consider the following 300-residue polypeptide: Erythroblast NAD(P)(+)--arginine ADP-ribosyltransferase (300 aa).

Positions Met-1–Ala-22 are cleaved as a signal peptide. 2 disulfides stabilise this stretch: Cys-51–Cys-260 and Cys-159–Cys-208. Residues Glu-70–Ser-256 form the TR mART core domain. NAD(+) contacts are provided by Tyr-107, Arg-164, and Gln-183. Residue Arg-164 is part of the active site. Ser-186 is a catalytic residue. Ser-217 serves as a coordination point for NAD(+). Residue Glu-224 is part of the active site. Residues Ser-276 to His-300 are disordered.

It belongs to the Arg-specific ADP-ribosyltransferase family.

The catalysed reaction is L-arginyl-[protein] + NAD(+) = N(omega)-(ADP-D-ribosyl)-L-arginyl-[protein] + nicotinamide + H(+). The chain is Erythroblast NAD(P)(+)--arginine ADP-ribosyltransferase (MADPRT) from Gallus gallus (Chicken).